The sequence spans 273 residues: NAD-dependent protein deacylase (273 aa).

The Deacetylase sirtuin-type domain maps to 20 to 272 (RERLRQRIFF…PEFVEKLLEG (253 aa)). 48–67 (GAGISAESGIRTFRAADGLW) is an NAD(+) binding site. Substrate-binding residues include tyrosine 92 and arginine 95. NAD(+) is bound at residue 129–132 (QNID). Histidine 147 serves as the catalytic Proton acceptor. Cysteine 155 and cysteine 174 together coordinate Zn(2+). Residues 214–216 (GTS), 240–242 (NLE), and alanine 258 contribute to the NAD(+) site.

It belongs to the sirtuin family. Class III subfamily. It depends on Zn(2+) as a cofactor.

The protein localises to the cytoplasm. It catalyses the reaction N(6)-acetyl-L-lysyl-[protein] + NAD(+) + H2O = 2''-O-acetyl-ADP-D-ribose + nicotinamide + L-lysyl-[protein]. The catalysed reaction is N(6)-succinyl-L-lysyl-[protein] + NAD(+) + H2O = 2''-O-succinyl-ADP-D-ribose + nicotinamide + L-lysyl-[protein]. It carries out the reaction N(6)-(2-hydroxyisobutanoyl)-L-lysyl-[protein] + NAD(+) + H2O = 2''-O-(2-hydroxyisobutanoyl)-ADP-D-ribose + nicotinamide + L-lysyl-[protein]. In terms of biological role, NAD-dependent lysine deacetylase that specifically removes acetyl groups on target proteins. Also acts as a protein-lysine deacylase by mediating protein desuccinylation and de-2-hydroxyisobutyrylation. Modulates the activities of several proteins which are inactive in their acylated form. The protein is NAD-dependent protein deacylase of Shigella flexneri.